The chain runs to 96 residues: NADH-ubiquinone oxidoreductase chain 6 (96 aa).

2 helical membrane passes run 24 to 44 and 48 to 68; these read MSLLLLLLIMSLCAVLWLGSI and WFAYILFIVYIGGILVLFIYV.

Belongs to the complex I subunit 6 family.

It is found in the mitochondrion membrane. It carries out the reaction a ubiquinone + NADH + 5 H(+)(in) = a ubiquinol + NAD(+) + 4 H(+)(out). Core subunit of the mitochondrial membrane respiratory chain NADH dehydrogenase (Complex I) that is believed to belong to the minimal assembly required for catalysis. Complex I functions in the transfer of electrons from NADH to the respiratory chain. The immediate electron acceptor for the enzyme is believed to be ubiquinone. The protein is NADH-ubiquinone oxidoreductase chain 6 (ND6) of Albinaria turrita (Door snail).